The chain runs to 120 residues: Large ribosomal subunit protein bL17 (120 aa).

The protein belongs to the bacterial ribosomal protein bL17 family. Part of the 50S ribosomal subunit. Contacts protein L32.

The chain is Large ribosomal subunit protein bL17 from Bacillus licheniformis (strain ATCC 14580 / DSM 13 / JCM 2505 / CCUG 7422 / NBRC 12200 / NCIMB 9375 / NCTC 10341 / NRRL NRS-1264 / Gibson 46).